The following is a 44-amino-acid chain: Cuticle protein CP466 (44 aa).

A run of 2 repeats spans residues 3 to 20 (LLEG…KKYL) and 27 to 44 (VLLT…NVQF).

As to expression, calcified shell.

The polypeptide is Cuticle protein CP466 (Cancer pagurus (Rock crab)).